We begin with the raw amino-acid sequence, 66 residues long: Large ribosomal subunit protein uL29 (66 aa).

This sequence belongs to the universal ribosomal protein uL29 family.

The chain is Large ribosomal subunit protein uL29 from Rhizobium etli (strain ATCC 51251 / DSM 11541 / JCM 21823 / NBRC 15573 / CFN 42).